We begin with the raw amino-acid sequence, 583 residues long: Protein FMP25, mitochondrial (583 aa).

Residues M1 to Y25 constitute a mitochondrion transit peptide. The helical transmembrane segment at A83 to P105 threads the bilayer. 4 RCC1 repeats span residues K332–K389, T390–R452, D459–E510, and E512–R569.

It is found in the mitochondrion membrane. The sequence is that of Protein FMP25, mitochondrial (FMP25) from Saccharomyces cerevisiae (strain ATCC 204508 / S288c) (Baker's yeast).